The chain runs to 554 residues: MAVQISETVRPFANFSPNPSLWGDQFINHKSKTQQISRIYLEEIEGLKNEVKCMLTSTPEGKMADTVNLIDTLERLGVSYHFEKEIEEKMKHLFNLIKADNYKDHEGCDLYTDALHFRLFRQHGYPISSGIFNKWMDGNGKFKESIKSDAKGLLSLYEACCLRTHGDTLLDEALVFATASLKSMAANLASPLRKQVEHALFQHLHFGIPRVEARHFITFYEEEEHKNEMLLRFAKLDFNALQALHKEELSEISKWWKDLDLISKLPYARDRVVESYFWAVGVYYQPKYSRARIMLTKTIAMTAILDDTYDSYGTLEELDVLTKAIERWDIKEINGLPEYIKGFYKQVLKLYQQLEEELAKEGRSYAVYYAIEACKELARSYAVEAKWFKKGYLPGFEEYLINSLVTSTAGYLNIISFFGVESVTKEDFEWFSKKPRIAVATQIITRVIDDIATYEVEKEKGQSATGIDCYMKEHGVSKEKAMQRFYEMSTNAWKDINEEGLSWPSSFSRDIFVQLRNFSRMVDVTYGKNEDGYSKPEKILKPLIIALFVDQIKL.

Mg(2+)-binding residues include Asp306, Asp310, Thr453, and Glu457. The short motif at 306 to 310 (DDTYD) is the DDXXD motif element.

The protein belongs to the terpene synthase family. The cofactor is Mg(2+).

It localises to the cytoplasm. It is found in the cytosol. It carries out the reaction (2E,6E)-farnesyl diphosphate = (+)-(R)-germacrene A + diphosphate. It participates in secondary metabolite biosynthesis; terpenoid biosynthesis. Sesquiterpene synthase involved in germacrene A biosynthesis. Also produces additional sesquiterpene products, including 4,5-di-epi-aristolochene, eremophilene, alpha-selinene. This chain is Germacrene A synthase, found in Pogostemon cablin (Patchouli).